We begin with the raw amino-acid sequence, 452 residues long: Friend leukemia integration 1 transcription factor (452 aa).

Position 39 is a phosphoserine (Ser39). The PNT domain maps to 112-198 (PPPPNMTTNE…SHLTYLRESS (87 aa)). A compositionally biased stretch (polar residues) spans 202–214 (YNTTSHTDPSSRL). The segment at 202-272 (YNTTSHTDPS…YQILGPTSSR (71 aa)) is disordered. Residues 215 to 226 (NVKEDPSYDSVR) are compositionally biased toward basic and acidic residues. Over residues 248 to 257 (QTMSKNTEQR) the composition is skewed to polar residues. A DNA-binding region (ETS) is located at residues 281-361 (IQLWQFLLEL…HGKRYAYKFD (81 aa)).

The protein belongs to the ETS family. In terms of assembly, can form homodimers or heterodimers with ETV6/TEL1.

The protein resides in the nucleus. Sequence-specific transcriptional activator. Recognizes the DNA sequence 5'-C[CA]GGAAGT-3'. This Bos taurus (Bovine) protein is Friend leukemia integration 1 transcription factor (FLI1).